A 249-amino-acid polypeptide reads, in one-letter code: UPF0524 protein C3orf70 homolog B (249 aa).

Residues 174–230 form a disordered region; it reads GPKMGHCSSPSTSEDSGINALGGHFLESCEEESEEEDELSTDGHSSPGSLWDQDECT. A compositionally biased stretch (acidic residues) spans 201–213; the sequence is SCEEESEEEDELS.

Belongs to the UPF0524 family.

Plays a role in neuronal and neurobehavioral development. Required for normal expression of the postmitotic and mature neuron markers elavl3 and eno2 and neurobehaviors related to circadian rhythm and altered light-dark conditions. The protein is UPF0524 protein C3orf70 homolog B of Danio rerio (Zebrafish).